The following is a 492-amino-acid chain: Solute carrier family 2, facilitated glucose transporter member 1 (492 aa).

M1 carries the post-translational modification N-acetylmethionine. At 1–11 (MEPSSKKVTGR) the chain is on the cytoplasmic side. A helical transmembrane segment spans residues 12 to 33 (LMLAVGGAVLGSLQFGYNTGVI). The Extracellular segment spans residues 34–66 (NAPQKVIEEFYNQTWNHRYGESIPSTTLTTLWS). An N-linked (GlcNAc...) asparagine glycan is attached at N45. The helical transmembrane segment at 67–87 (LSVAIFSVGGMIGSFSVGLFV) threads the bilayer. At 88 to 90 (NRF) the chain is on the cytoplasmic side. A helical membrane pass occupies residues 91 to 112 (GRRNSMLMMNLLAFVSAVLMGF). Residues 113–120 (SKLGKSFE) lie on the Extracellular side of the membrane. A helical transmembrane segment spans residues 121 to 144 (MLILGRFIIGVYCGLTTGFVPMYV). Over 145 to 155 (GEVSPTALRGA) the chain is Cytoplasmic. A helical transmembrane segment spans residues 156–176 (LGTLHQLGIVVGILIAQVFGL). Residue Q161 participates in D-glucose binding. Over 177-185 (DSIMGNADL) the chain is Extracellular. A helical membrane pass occupies residues 186 to 206 (WPLLLSVIFIPALLQCILLPF). The Cytoplasmic portion of the chain corresponds to 207 to 271 (CPESPRFLLI…LFRSPAYRQP (65 aa)). S226 is modified (phosphoserine). A helical membrane pass occupies residues 272-293 (ILIAVVLQLSQQLSGINAVFYY). D-glucose-binding positions include 282 to 283 (QQ) and N288. Over 294 to 306 (STSIFEKAGVQQP) the chain is Extracellular. The helical transmembrane segment at 307–328 (VYATIGSGIVNTAFTVVSLFVV) threads the bilayer. Residue N317 coordinates D-glucose. Topologically, residues 329 to 334 (ERAGRR) are cytoplasmic. The chain crosses the membrane as a helical span at residues 335 to 355 (TLHLIGLAGMAGCAVLMTIAL). At 356-365 (ALLEQLPWMS) the chain is on the extracellular side. Residues 366–388 (YLSIVAIFGFVAFFEVGPGPIPW) form a helical membrane-spanning segment. The D-glucose site is built by E380 and W388. At 389 to 401 (FIVAELFSQGPRP) the chain is on the cytoplasmic side. A helical membrane pass occupies residues 402 to 422 (AAVAVAGFSNWTSNFIVGMCF). Residues 423–429 (QYVEQLC) lie on the Extracellular side of the membrane. Residues 430–450 (GPYVFIIFTVLLVLFFIFTYF) form a helical membrane-spanning segment. Residues 451 to 492 (KVPETKGRTFDEIASGFRQGGASQSDKTPEELFHPLGADSQV) lie on the Cytoplasmic side of the membrane. A Phosphoserine modification is found at S465. The interval 468–492 (RQGGASQSDKTPEELFHPLGADSQV) is disordered. Phosphothreonine is present on T478. Position 490 is a phosphoserine (S490).

This sequence belongs to the major facilitator superfamily. Sugar transporter (TC 2.A.1.1) family. Glucose transporter subfamily. As to quaternary structure, found in a complex with ADD2, DMTN and SLC2A1. Interacts (via C-terminus cytoplasmic region) with DMTN. Interacts with SNX27; the interaction is required when endocytosed to prevent degradation in lysosomes and promote recycling to the plasma membrane. Interacts with STOM. Interacts with GIPC (via PDZ domain). Interacts with SGTA (via Gln-rich region). Interacts with isoform 1 of BSG. Interacts with SMIM43; the interaction may promote SLC2A1-mediated glucose transport to meet the energy needs of mesendoderm differentiation. In terms of processing, phosphorylation at Ser-226 by PKC promotes glucose uptake by increasing cell membrane localization. As to expression, detected in osteoblastic cells (at protein level). Detected in brain, and at lower levels in kidney, heart and lung.

Its subcellular location is the cell membrane. The protein localises to the photoreceptor inner segment. It catalyses the reaction D-glucose(out) = D-glucose(in). Its activity is regulated as follows. The uptake of glucose is inhibited by cytochalasin B. Glucose uptake is increased in response to phorbol ester 12-O-tetradecanoylphorbol-13-acetate (TPA) treatment: TPA-induced glucose uptake requires phosphorylation at Ser-226. In terms of biological role, facilitative glucose transporter, which is responsible for constitutive or basal glucose uptake. Has a very broad substrate specificity; can transport a wide range of aldoses including both pentoses and hexoses. Most important energy carrier of the brain: present at the blood-brain barrier and assures the energy-independent, facilitative transport of glucose into the brain. In association with BSG and NXNL1, promotes retinal cone survival by increasing glucose uptake into photoreceptors. Required for mesendoderm differentiation. The polypeptide is Solute carrier family 2, facilitated glucose transporter member 1 (Rattus norvegicus (Rat)).